The following is a 413-amino-acid chain: Putative adhesin P1-like protein MPN_144 (413 aa).

Polar residues-rich tracts occupy residues 1-13 (MGQQ…SAGN), 25-54 (SGDS…NLTP), and 355-376 (SFGT…VFGT). 2 disordered regions span residues 1 to 60 (MGQQ…DWPN) and 355 to 413 (SFGT…VSGH). Gly residues predominate over residues 385 to 399 (LSGGGAGGGSSGSGQ).

This sequence belongs to the adhesin P1 family.

This is Putative adhesin P1-like protein MPN_144 from Mycoplasma pneumoniae (strain ATCC 29342 / M129 / Subtype 1) (Mycoplasmoides pneumoniae).